Consider the following 764-residue polypeptide: Polymeric immunoglobulin receptor (764 aa).

The N-terminal stretch at 1-18 is a signal peptide; that stretch reads MLLFVLTCLLAVFPAIST. Residues 19–120 form the Ig-like V-type 1; required for binding to polymeric IgA and IgM domain; the sequence is KSPIFGPEEV…GLGINSRGLS (102 aa). At 19–638 the chain is on the extracellular side; the sequence is KSPIFGPEEV…SSEEQGGSSR (620 aa). Disulfide bonds link cysteine 40/cysteine 110 and cysteine 56/cysteine 64. Residues asparagine 83, asparagine 90, asparagine 135, and asparagine 186 are each glycosylated (N-linked (GlcNAc...) asparagine). 4 consecutive Ig-like V-type domains span residues 145–237, 250–352, 364–458, and 462–561; these read GRTV…DLQV, RGSV…ESTI, GGSV…IKII, and PNLK…VYVA. Cystine bridges form between cysteine 152-cysteine 220, cysteine 257-cysteine 325, cysteine 271-cysteine 279, cysteine 371-cysteine 441, and cysteine 385-cysteine 395. A glycan (N-linked (GlcNAc...) asparagine) is linked at asparagine 421. Asparagine 469 carries N-linked (GlcNAc...) (complex) asparagine glycosylation. 3 disulfide bridges follow: cysteine 482–cysteine 544, cysteine 486–cysteine 520, and cysteine 496–cysteine 503. The N-linked (GlcNAc...) asparagine glycan is linked to asparagine 499. Positions 609 to 619 are enriched in basic and acidic residues; it reads KAVADTRDQAD. The disordered stretch occupies residues 609-637; it reads KAVADTRDQADGSRASVDSGSSEEQGGSS. Residues 627–637 show a composition bias toward low complexity; the sequence is SGSSEEQGGSS. A helical membrane pass occupies residues 639–661; that stretch reads ALVSTLVPLGLVLAVGAVAVGVA. At 662-764 the chain is on the cytoplasmic side; that stretch reads RARHRKNVDR…AEAQDGPQEA (103 aa). 4 positions are modified to phosphoserine: serine 673, serine 682, serine 689, and serine 735. The disordered stretch occupies residues 717–738; that stretch reads ATTESTTETKEPKKAKRSSKEE. Residues 723 to 738 are compositionally biased toward basic and acidic residues; sequence TETKEPKKAKRSSKEE.

In terms of assembly, interacts (mainly via CDR1-like domain) with dimeric IgA. Interacts (mainly via CDR2-like domain) with pentameric IgM. As to quaternary structure, either free or part of the secretory IgA (sIgA) complex that consists of two, four or five IgA monomers, and two additional non-Ig polypeptides, namely the JCHAIN and the secretory component (the proteolytic product of PIGR). Free secretory component interacts with bacterial antigens toxA of C.difficile and eaeA of E.coli. N-glycosylated. N-glycosylation is required for anchoring IgA molecules to mucus, but is not necessary for Ig binding.

The protein localises to the cell membrane. It is found in the secreted. Functionally, mediates selective transcytosis of polymeric IgA and IgM across mucosal epithelial cells. Binds polymeric IgA and IgM at the basolateral surface of epithelial cells. The complex is then transported across the cell to be secreted at the apical surface. During this process, a cleavage occurs that separates the extracellular (known as the secretory component) from the transmembrane segment. Through its N-linked glycans ensures anchoring of secretory IgA (sIgA) molecules to mucus lining the epithelial surface to neutralize extracellular pathogens. On its own (free form) may act as a non-specific microbial scavenger to prevent pathogen interaction with epithelial cells. The polypeptide is Polymeric immunoglobulin receptor (PIGR) (Homo sapiens (Human)).